The sequence spans 570 residues: Sulfite reductase [NADPH] hemoprotein beta-component (570 aa).

The [4Fe-4S] cluster site is built by cysteine 434, cysteine 440, cysteine 479, and cysteine 483. Cysteine 483 contributes to the siroheme binding site.

It belongs to the nitrite and sulfite reductase 4Fe-4S domain family. In terms of assembly, alpha(8)-beta(8). The alpha component is a flavoprotein, the beta component is a hemoprotein. Requires siroheme as cofactor. The cofactor is [4Fe-4S] cluster.

It catalyses the reaction hydrogen sulfide + 3 NADP(+) + 3 H2O = sulfite + 3 NADPH + 4 H(+). Its pathway is sulfur metabolism; hydrogen sulfide biosynthesis; hydrogen sulfide from sulfite (NADPH route): step 1/1. In terms of biological role, component of the sulfite reductase complex that catalyzes the 6-electron reduction of sulfite to sulfide. This is one of several activities required for the biosynthesis of L-cysteine from sulfate. This is Sulfite reductase [NADPH] hemoprotein beta-component from Salmonella enteritidis PT4 (strain P125109).